A 367-amino-acid chain; its full sequence is Cyclin-dependent kinase 5 activator 2 (367 aa).

The span at 1–11 shows a compositional bias: polar residues; the sequence is MGTVLSLSPAS. Disordered stretches follow at residues 1–56, 72–98, 131–175, and 329–367; these read MGTV…RLKR, ASAKKKKGSKKVTPKPASTGPDPLVQQ, AAAT…GSPR, and GEAAASGGGPPSGGAPAASSAARDSCAAGTKHWTMNLDR. Glycine 2 is lipidated: N-myristoyl glycine. The segment covering 74 to 84 has biased composition (basic residues); it reads AKKKKGSKKVT. Position 84 is a phosphothreonine (threonine 84). Positions 131-148 are enriched in low complexity; that stretch reads AAATCEPPSGGSAAAQPP. Positions 154–171 are enriched in pro residues; sequence KPPPPPPPAPQVAPPVPG. Residues 342 to 357 are compositionally biased toward low complexity; it reads GAPAASSAARDSCAAG.

This sequence belongs to the cyclin-dependent kinase 5 activator family. Heterodimer of a catalytic subunit and a regulatory subunit. Post-translationally, myristoylated. The Gly-2-Ala mutant is absent of the cell periphery, suggesting that a proper myristoylation signal is essential for the proper distribution of CDK5R2 (p39). Brain and neuron specific.

Its subcellular location is the cell membrane. Activator of CDK5/TPKII. This chain is Cyclin-dependent kinase 5 activator 2 (CDK5R2), found in Homo sapiens (Human).